The sequence spans 682 residues: Methionine--tRNA ligase (682 aa).

Residues 14-24 carry the 'HIGH' region motif; it reads PYANGSIHLGH. Positions 145, 148, 158, and 161 each coordinate Zn(2+). The 'KMSKS' region signature appears at 331–335; sequence KMSKS. Lys334 is an ATP binding site. The tRNA-binding domain occupies 580 to 682; that stretch reads AFAAVDLRVA…SGAKPGQRIK (103 aa).

The protein belongs to the class-I aminoacyl-tRNA synthetase family. MetG type 1 subfamily. Homodimer. It depends on Zn(2+) as a cofactor.

The protein resides in the cytoplasm. The catalysed reaction is tRNA(Met) + L-methionine + ATP = L-methionyl-tRNA(Met) + AMP + diphosphate. Its function is as follows. Is required not only for elongation of protein synthesis but also for the initiation of all mRNA translation through initiator tRNA(fMet) aminoacylation. This is Methionine--tRNA ligase from Pseudomonas savastanoi pv. phaseolicola (strain 1448A / Race 6) (Pseudomonas syringae pv. phaseolicola (strain 1448A / Race 6)).